A 258-amino-acid polypeptide reads, in one-letter code: Ribosomal RNA small subunit methyltransferase J (258 aa).

S-adenosyl-L-methionine is bound by residues 106–107 (RD), 122–123 (ER), and D181.

It belongs to the methyltransferase superfamily. RsmJ family.

It is found in the cytoplasm. The catalysed reaction is guanosine(1516) in 16S rRNA + S-adenosyl-L-methionine = N(2)-methylguanosine(1516) in 16S rRNA + S-adenosyl-L-homocysteine + H(+). Its function is as follows. Specifically methylates the guanosine in position 1516 of 16S rRNA. The protein is Ribosomal RNA small subunit methyltransferase J of Pseudoalteromonas atlantica (strain T6c / ATCC BAA-1087).